The following is a 567-amino-acid chain: Glucose-6-phosphate isomerase, cytosolic (567 aa).

E360 functions as the Proton donor in the catalytic mechanism. Residues H391 and K516 contribute to the active site.

Belongs to the GPI family. In terms of assembly, homodimer.

The protein localises to the cytoplasm. The catalysed reaction is alpha-D-glucose 6-phosphate = beta-D-fructose 6-phosphate. The protein operates within carbohydrate degradation; glycolysis; D-glyceraldehyde 3-phosphate and glycerone phosphate from D-glucose: step 2/4. In Zea mays (Maize), this protein is Glucose-6-phosphate isomerase, cytosolic (PHI1).